The sequence spans 553 residues: Formate--tetrahydrofolate ligase 2 (553 aa).

An ATP-binding site is contributed by 63 to 70 (TSAGEGKS).

The protein belongs to the formate--tetrahydrofolate ligase family.

The catalysed reaction is (6S)-5,6,7,8-tetrahydrofolate + formate + ATP = (6R)-10-formyltetrahydrofolate + ADP + phosphate. Its pathway is one-carbon metabolism; tetrahydrofolate interconversion. The sequence is that of Formate--tetrahydrofolate ligase 2 from Lactobacillus acidophilus (strain ATCC 700396 / NCK56 / N2 / NCFM).